We begin with the raw amino-acid sequence, 219 residues long: Glucagon-2 (219 aa).

A signal peptide spans 1 to 20 (MKSTCYMIGILLLILQNTYQ). Propeptides lie at residues 21 to 50 (SPVP…LKEV), 84 to 95 (SGGLSRRNADYE), 136 to 140 (NAEIE), 175 to 178 (IRYS), and 213 to 219 (KDLLEEH). Residues 23-43 (VPEADGSSRSVKAARNEAVDD) form a disordered region.

This sequence belongs to the glucagon family.

It is found in the secreted. Promotes hydrolysis of glycogen and lipids, and raises the blood sugar level. This is Glucagon-2 (gcg2) from Xenopus laevis (African clawed frog).